The primary structure comprises 423 residues: UPF0229 protein Psyr_4632 (423 aa).

Residues 65 to 110 (HHGRGGKQTVVHPGNKEFTTGEHIARPQGGGGGKGPGKAGNSGEGM) are disordered. Over residues 92 to 107 (QGGGGGKGPGKAGNSG) the composition is skewed to gly residues.

It belongs to the UPF0229 family.

The polypeptide is UPF0229 protein Psyr_4632 (Pseudomonas syringae pv. syringae (strain B728a)).